Here is a 529-residue protein sequence, read N- to C-terminus: Pheophorbide a oxygenase, chloroplastic (529 aa).

Disordered regions lie at residues 1 to 24 (MPVM…RRVP) and 46 to 72 (LRVA…TSSA). A chloroplast-targeting transit peptide spans 1 to 47 (MPVMAPTASLLLSPRPLPASRRVPSLPALSASGRLRLRRARADTRLR). Residues 82–194 (WYPVSLVEDL…TLVSQGLLFV (113 aa)) form the Rieske domain. Positions 124, 126, 144, and 147 each coordinate [2Fe-2S] cluster.

Requires [2Fe-2S] cluster as cofactor. Expressed in leaves. Expressed at low levels in roots, stems, panicles and seeds.

The protein localises to the plastid. Its subcellular location is the chloroplast. The catalysed reaction is pheophorbide a + 2 reduced [2Fe-2S]-[ferredoxin] + O2 + 2 H(+) = red chlorophyll catabolite + 2 oxidized [2Fe-2S]-[ferredoxin]. It functions in the pathway porphyrin-containing compound metabolism; chlorophyll degradation. In terms of biological role, catalyzes the key reaction of chlorophyll catabolism, porphyrin macrocycle cleavage of pheophorbide a (pheide a) to a primary fluorescent catabolite (pFCC). Works in a two-step reaction with red chlorophyll catabolite reductase (RCCR). Creates the intermediate RCC through the opening of the porphyrin macrocycle by the introduction of one atom of molecular oxygen at the alpha-methine bridge. Seems to be specific for pheide a. Belongs to the chlorophyll catabolic enzymes (CCEs). May play a role in senescence and response to wounding. The sequence is that of Pheophorbide a oxygenase, chloroplastic from Oryza sativa subsp. japonica (Rice).